We begin with the raw amino-acid sequence, 257 residues long: uncharacterized protein (257 aa).

Positions 1 to 22 (MIHSKRLRLWLYLVLLAVFIGA) are cleaved as a signal peptide. C23 carries the N-palmitoyl cysteine lipid modification. The S-diacylglycerol cysteine moiety is linked to residue C23.

Belongs to the staphylococcal tandem lipoprotein family.

Its subcellular location is the cell membrane. This is an uncharacterized protein from Staphylococcus aureus (strain NCTC 8325 / PS 47).